The sequence spans 342 residues: Periplasmic protein TorT (342 aa).

The first 18 residues, M1–S18, serve as a signal peptide directing secretion.

The protein belongs to the bacterial solute-binding protein 2 family.

The protein resides in the periplasm. Functionally, upon binding a putative inducer it probably interacts with TorS and allows it to play a role in the induction of the torCAD operon for trimethylamine N-oxide reductase. This Escherichia coli (strain K12) protein is Periplasmic protein TorT (torT).